The primary structure comprises 146 residues: Ribosome maturation factor RimP (146 aa).

The protein belongs to the RimP family.

It is found in the cytoplasm. Functionally, required for maturation of 30S ribosomal subunits. This is Ribosome maturation factor RimP from Dechloromonas aromatica (strain RCB).